The primary structure comprises 141 residues: U1 small nuclear ribonucleoprotein C (141 aa).

The segment at 4 to 36 (YYCEYCDKYLTHDSPSVRKSHTIGKVHQQAVTL) adopts a Matrin-type zinc-finger fold. The interval 69–141 (LLPPNMVPGQ…SNSPPSNNDQ (73 aa)) is disordered. A compositionally biased stretch (pro residues) spans 83-97 (MMPPGQFPFPPPPGQ). 2 stretches are compositionally biased toward low complexity: residues 100–110 (GGMPPHQQQPM) and 124–141 (QQSA…NNDQ).

The protein belongs to the U1 small nuclear ribonucleoprotein C family. As to quaternary structure, component of the U1 snRNP. The U1 snRNP is composed of the U1 snRNA and the 7 core Sm proteins SNRPB, SNRPD1, SNRPD2, SNRPD3, SNRPE, SNRPF and SNRPG that assemble in a heptameric protein ring on the Sm site of the small nuclear RNA to form the core snRNP, and at least 3 U1 snRNP-specific proteins SNRNP70/U1-70K, SNRPA/U1-A and SNRPC/U1-C. SNRPC/U1-C interacts with U1 snRNA and the 5' splice-site region of the pre-mRNA.

The protein resides in the nucleus. Functionally, component of the spliceosomal U1 snRNP, which is essential for recognition of the pre-mRNA 5' splice-site and the subsequent assembly of the spliceosome. SNRPC/U1-C is directly involved in initial 5' splice-site recognition for both constitutive and regulated alternative splicing. The interaction with the 5' splice-site seems to precede base-pairing between the pre-mRNA and the U1 snRNA. Stimulates commitment or early (E) complex formation by stabilizing the base pairing of the 5' end of the U1 snRNA and the 5' splice-site region. In Heterostelium pallidum (strain ATCC 26659 / Pp 5 / PN500) (Cellular slime mold), this protein is U1 small nuclear ribonucleoprotein C.